Here is a 180-residue protein sequence, read N- to C-terminus: Shikimate kinase (180 aa).

Gly-14–Cys-19 contacts ATP. A Mg(2+)-binding site is contributed by Thr-18. 3 residues coordinate substrate: Asp-36, Arg-60, and Gly-82. Arg-120 provides a ligand contact to ATP. Arg-139 contacts substrate.

Belongs to the shikimate kinase family. Monomer. The cofactor is Mg(2+).

Its subcellular location is the cytoplasm. It catalyses the reaction shikimate + ATP = 3-phosphoshikimate + ADP + H(+). It functions in the pathway metabolic intermediate biosynthesis; chorismate biosynthesis; chorismate from D-erythrose 4-phosphate and phosphoenolpyruvate: step 5/7. Its function is as follows. Catalyzes the specific phosphorylation of the 3-hydroxyl group of shikimic acid using ATP as a cosubstrate. In Stenotrophomonas maltophilia (strain R551-3), this protein is Shikimate kinase.